The primary structure comprises 1089 residues: MSAILNASVDSNTNIEYQTISSTQSQISEEQSERLHDRISKEQLEKLHEAFKAYPDQQLGVEELREVLEEVDIVFNDAVYTRLFLKINQNHDFRVDWNEFVSYLIFGFQEEDPSSQKESLILPISVPPVVRKSEHRSAVCCLALLKVKSDQAPLEEVAETSNFSFGGEDSPEASGMWVTASHEGMMKFWSSHMEPIRTASSESSNLPHAVYVMSYAFYNNGKVHSKLILGDYGGNVRILSYSPHLRGPFQAKPGAALIEVVWSDVLKGKIPLLIPKEYINLHSELISCVYYSLHMNALFASAEYRNTKKYRGRCPGIIMVSYGDKSNFRIPLGVTTFFVAESHNIVVTGGPDTFVRIWDVYIPTEPSAILTGHNGGIVMVFVQPEENKVYSVDYQKIIKVWNLQEHTLLQTYGDLVRLIHHTETDLTYYYHSHLRELIVAGRKLISIKCCPRVRVDLTDGNTHAAPVSVVLYNRLFRNIVTCGLDSYIIVWDPWTGRRKIIMKSCHTKMIYGETIDIEITAACFDPLEQFLLTGARDGSLKIWNYNNAVVIRNMSIQPDQEVTAVIWVVERILAMGWDRQVTEFNDVEGREYGDPKKWPKFHTDDITCGDVKLGEGVVTATYSGEIIFWKLETGQPYRRYSVMEPKRFIELKLSDEEKQMKRSKRWASRAPHSGSHMMSHTGSHMGSNVDQMSGSRSRGLAILQGQEEIREYGVNVPISVQAVLFLQNRPQTLHHGSVFISLDTGIIQVYSHHQRGGYMNEFLAVHKTGDCVLTMATDRKNRFLFTGTAFGYIKVWYIVNYCIPEAEKIHVCMPRLRLDFIFLRKETFLTRAKRVVRNQAEPLLVSSYKGHLKAINSISFINLPKIIITGSHDYSCRLWTQGGRYLGTLGSVLPWTKLSPFERAGDDTHVYRLPPDIKKVASSTTLKVISGLQVDRPMKRPDKAKTEEKEEDTAQALETNDLKKLFDRPLKDPILGKHFQLPGRSALDQRIDLDTTQSYIPVYTNLKVHPSEELERLPTPAVISRVQAENYLHQYLPVEGKVDLNDSALNIKLPSRRRSDRTNDPRNMRTAKTRGDMGLGHRSSHTSQN.

WD repeat units follow at residues 155–199 (EEVA…IRTA), 207–249 (PHAV…RGPF), 329–368 (RIPL…EPSA), 372–411 (GHNG…LLQT), 462–501 (THAA…RKII), 514–553 (TIDI…VIRN), and 601–641 (FHTD…RRYS). The tract at residues 661–684 (KRSKRWASRAPHSGSHMMSHTGSH) is disordered. The span at 672–684 (HSGSHMMSHTGSH) shows a compositional bias: low complexity. 2 WD repeats span residues 767-806 (KTGD…IPEA) and 850-889 (GHLK…LGTL). Residues 1049–1089 (LNIKLPSRRRSDRTNDPRNMRTAKTRGDMGLGHRSSHTSQN) are disordered.

The polypeptide is WD repeat-containing protein on Y chromosome (Drosophila willistoni (Fruit fly)).